Consider the following 931-residue polypeptide: 3'-5' exonuclease DinG (931 aa).

Residues 7–162 enclose the Exonuclease domain; the sequence is VVIDVETTGN…DSDAEVTGLI (156 aa). The 261-residue stretch at 250 to 510 folds into the Helicase ATP-binding domain; sequence LSELMPGYEK…KKMRQLFQRN (261 aa). 284-291 contributes to the ATP binding site; the sequence is APPGIGKT. The DEAH box signature appears at 462–465; that stretch reads DEAH. In terms of domain architecture, Helicase C-terminal spans 741 to 897; the sequence is DTARYIELMA…TIIILDRRIK (157 aa).

This sequence belongs to the helicase family. DinG subfamily. Type 2 sub-subfamily.

Its subcellular location is the cytoplasm. In terms of biological role, 3'-5' exonuclease. The chain is 3'-5' exonuclease DinG from Bacillus subtilis (strain 168).